The sequence spans 230 residues: Potassium/proton antiporter CemA (230 aa).

4 helical membrane-spanning segments follow: residues L7 to F27, I106 to L126, L145 to H165, and F181 to L201.

This sequence belongs to the CemA family.

Its subcellular location is the plastid. It localises to the chloroplast inner membrane. It carries out the reaction K(+)(in) + H(+)(out) = K(+)(out) + H(+)(in). Contributes to K(+)/H(+) antiport activity by supporting proton efflux to control proton extrusion and homeostasis in chloroplasts in a light-dependent manner to modulate photosynthesis. Prevents excessive induction of non-photochemical quenching (NPQ) under continuous-light conditions. Indirectly promotes efficient inorganic carbon uptake into chloroplasts. This is Potassium/proton antiporter CemA from Hordeum vulgare (Barley).